Here is a 204-residue protein sequence, read N- to C-terminus: Pyridoxal 5'-phosphate synthase subunit PdxT (204 aa).

Position 52-54 (52-54 (GES)) interacts with L-glutamine. Cys84 (nucleophile) is an active-site residue. L-glutamine-binding positions include Arg116 and 143-144 (IR). Catalysis depends on charge relay system residues His184 and Glu186.

It belongs to the glutaminase PdxT/SNO family. As to quaternary structure, in the presence of PdxS, forms a dodecamer of heterodimers. Only shows activity in the heterodimer.

The catalysed reaction is aldehydo-D-ribose 5-phosphate + D-glyceraldehyde 3-phosphate + L-glutamine = pyridoxal 5'-phosphate + L-glutamate + phosphate + 3 H2O + H(+). It catalyses the reaction L-glutamine + H2O = L-glutamate + NH4(+). Its pathway is cofactor biosynthesis; pyridoxal 5'-phosphate biosynthesis. Its function is as follows. Catalyzes the hydrolysis of glutamine to glutamate and ammonia as part of the biosynthesis of pyridoxal 5'-phosphate. The resulting ammonia molecule is channeled to the active site of PdxS. In Pyrobaculum aerophilum (strain ATCC 51768 / DSM 7523 / JCM 9630 / CIP 104966 / NBRC 100827 / IM2), this protein is Pyridoxal 5'-phosphate synthase subunit PdxT.